The sequence spans 293 residues: Glutamyl-Q tRNA(Asp) synthetase (293 aa).

L-glutamate is bound by residues 26–30 (RFAPS) and Asp-62. The 'HIGH' region signature appears at 29 to 39 (PSPTGLLHLGN). Zn(2+)-binding residues include Cys-118, Cys-120, Tyr-131, and Cys-135. L-glutamate-binding residues include Tyr-178 and Arg-196. Positions 234–238 (KLSKR) match the 'KMSKS' region motif. Residue Lys-237 coordinates ATP.

It belongs to the class-I aminoacyl-tRNA synthetase family. GluQ subfamily. Zn(2+) serves as cofactor.

Functionally, catalyzes the tRNA-independent activation of glutamate in presence of ATP and the subsequent transfer of glutamate onto a tRNA(Asp). Glutamate is transferred on the 2-amino-5-(4,5-dihydroxy-2-cyclopenten-1-yl) moiety of the queuosine in the wobble position of the QUC anticodon. The polypeptide is Glutamyl-Q tRNA(Asp) synthetase (Synechococcus sp. (strain CC9605)).